A 493-amino-acid polypeptide reads, in one-letter code: Ketol-acid reductoisomerase (NADP(+)) (493 aa).

The region spanning 15 to 208 is the KARI N-terminal Rossmann domain; sequence AQLGKCRFMQ…GGDRAGVLES (194 aa). NADP(+)-binding positions include 45–48, R68, R76, S78, and 108–110; these read CGAQ and DKQ. Residue H132 is part of the active site. Residue G158 coordinates NADP(+). 2 KARI C-terminal knotted domains span residues 209 to 344 and 345 to 486; these read SFVA…NAPA and FAGK…MKDM. Mg(2+) contacts are provided by D217, E221, E389, and E393. S414 lines the substrate pocket.

Belongs to the ketol-acid reductoisomerase family. It depends on Mg(2+) as a cofactor.

It catalyses the reaction (2R)-2,3-dihydroxy-3-methylbutanoate + NADP(+) = (2S)-2-acetolactate + NADPH + H(+). It carries out the reaction (2R,3R)-2,3-dihydroxy-3-methylpentanoate + NADP(+) = (S)-2-ethyl-2-hydroxy-3-oxobutanoate + NADPH + H(+). It functions in the pathway amino-acid biosynthesis; L-isoleucine biosynthesis; L-isoleucine from 2-oxobutanoate: step 2/4. The protein operates within amino-acid biosynthesis; L-valine biosynthesis; L-valine from pyruvate: step 2/4. In terms of biological role, involved in the biosynthesis of branched-chain amino acids (BCAA). Catalyzes an alkyl-migration followed by a ketol-acid reduction of (S)-2-acetolactate (S2AL) to yield (R)-2,3-dihydroxy-isovalerate. In the isomerase reaction, S2AL is rearranged via a Mg-dependent methyl migration to produce 3-hydroxy-3-methyl-2-ketobutyrate (HMKB). In the reductase reaction, this 2-ketoacid undergoes a metal-dependent reduction by NADPH to yield (R)-2,3-dihydroxy-isovalerate. The sequence is that of Ketol-acid reductoisomerase (NADP(+)) from Aeromonas hydrophila subsp. hydrophila (strain ATCC 7966 / DSM 30187 / BCRC 13018 / CCUG 14551 / JCM 1027 / KCTC 2358 / NCIMB 9240 / NCTC 8049).